The following is a 165-amino-acid chain: Chorismate pyruvate-lyase (165 aa).

Substrate is bound by residues M35, R77, L115, and E156.

The protein belongs to the UbiC family. As to quaternary structure, monomer.

Its subcellular location is the cytoplasm. The enzyme catalyses chorismate = 4-hydroxybenzoate + pyruvate. Its pathway is cofactor biosynthesis; ubiquinone biosynthesis. Its function is as follows. Removes the pyruvyl group from chorismate, with concomitant aromatization of the ring, to provide 4-hydroxybenzoate (4HB) for the ubiquinone pathway. The polypeptide is Chorismate pyruvate-lyase (Escherichia coli O7:K1 (strain IAI39 / ExPEC)).